The primary structure comprises 165 residues: Ribosome maturation factor RimM (165 aa).

The 72-residue stretch at 90 to 161 (EDEYFIVDLV…LITIRPSGEW (72 aa)) folds into the PRC barrel domain.

Belongs to the RimM family. In terms of assembly, binds ribosomal protein uS19.

The protein localises to the cytoplasm. Its function is as follows. An accessory protein needed during the final step in the assembly of 30S ribosomal subunit, possibly for assembly of the head region. Essential for efficient processing of 16S rRNA. May be needed both before and after RbfA during the maturation of 16S rRNA. It has affinity for free ribosomal 30S subunits but not for 70S ribosomes. The polypeptide is Ribosome maturation factor RimM (Clostridium perfringens (strain SM101 / Type A)).